The following is a 163-amino-acid chain: NADH-quinone oxidoreductase subunit I (163 aa).

4Fe-4S ferredoxin-type domains are found at residues 54–84 and 94–123; these read LRRYPNGEERCIACKLCEAVCPALAITIESD and TRYDIDLTKCIFCGFCEEACPVDAVVETPI. Residues Cys64, Cys67, Cys70, Cys74, Cys103, Cys106, Cys109, and Cys113 each contribute to the [4Fe-4S] cluster site.

This sequence belongs to the complex I 23 kDa subunit family. In terms of assembly, NDH-1 is composed of 14 different subunits. Subunits NuoA, H, J, K, L, M, N constitute the membrane sector of the complex. [4Fe-4S] cluster serves as cofactor.

The protein resides in the cell inner membrane. It carries out the reaction a quinone + NADH + 5 H(+)(in) = a quinol + NAD(+) + 4 H(+)(out). NDH-1 shuttles electrons from NADH, via FMN and iron-sulfur (Fe-S) centers, to quinones in the respiratory chain. The immediate electron acceptor for the enzyme in this species is believed to be ubiquinone. Couples the redox reaction to proton translocation (for every two electrons transferred, four hydrogen ions are translocated across the cytoplasmic membrane), and thus conserves the redox energy in a proton gradient. The protein is NADH-quinone oxidoreductase subunit I of Cupriavidus pinatubonensis (strain JMP 134 / LMG 1197) (Cupriavidus necator (strain JMP 134)).